An 87-amino-acid polypeptide reads, in one-letter code: Small ribosomal subunit protein bS20 (87 aa).

A compositionally biased stretch (basic residues) spans Met1–Ala11. A disordered region spans residues Met1 to Ser26.

It belongs to the bacterial ribosomal protein bS20 family.

In terms of biological role, binds directly to 16S ribosomal RNA. This Actinobacillus pleuropneumoniae serotype 5b (strain L20) protein is Small ribosomal subunit protein bS20.